The following is a 500-amino-acid chain: AAAATQAVPAPNQQPEVFYNQIFINNEWHDAVSKKTFPTVNPSTGEVICQVAAGDKEDVDRAVKAARAAFQLGSPWRRMDASDRGRLLNRLADLIERDRTYLAALETLDNGKPYVISYLVDLDMVLKCLRYYAGWADKYHGKTIPIDGDFFSYTRHEPVGVCGQIIPWNFPLLMQAAKLGPALATGNVVVMKVAEQTPLTALYVANLTKEAGFPPGVVNVVPGFGPTAGAAIASHEDVDKVAFTGSTEVGHLIQVAAGRSNLKKVTLELGGKSPNIIVSDADMDWAVEQAHFALFFNQGQCCGAGSRTFVQEDVYAEFVERSVARAKSRVVGNPFDSQTEQGPQVDETQFNKVLGYIKSGKEEGAKLLCGGGAAADRGYFIQPTVFGDVQDGMTIAKEEIFGPVMQILKFKTIEEVVGRANNSKYGLAAAVFTKDLDKANYLSQALQAGTVWINCYDVFGAQSPFGGYKMSGNGRELGEYGLQAYTEVKTVTIKVPQKNS.

N6-acetyllysine occurs at positions 35, 56, and 142. NAD(+) is bound at residue 245–250; it reads GSTEVG. The active-site Proton acceptor is the Glu-268. Cys-302 functions as the Nucleophile in the catalytic mechanism. 6 positions are modified to N6-acetyllysine: Lys-358, Lys-366, Lys-409, Lys-411, Lys-424, and Lys-434.

This sequence belongs to the aldehyde dehydrogenase family. As to quaternary structure, homotetramer. In response to mitochondrial stress, the precursor protein is ubiquitinated by the SIFI complex in the cytoplasm before mitochondrial import, leading to its degradation. Within the SIFI complex, UBR4 initiates ubiquitin chain that are further elongated or branched by KCMF1.

Its subcellular location is the mitochondrion matrix. It carries out the reaction an aldehyde + NAD(+) + H2O = a carboxylate + NADH + 2 H(+). It functions in the pathway alcohol metabolism; ethanol degradation; acetate from ethanol: step 2/2. Required for clearance of cellular formaldehyde, a cytotoxic and carcinogenic metabolite that induces DNA damage. This is Aldehyde dehydrogenase, mitochondrial (ALDH2) from Equus caballus (Horse).